The primary structure comprises 131 residues: Small ribosomal subunit protein uS8 (131 aa).

The protein belongs to the universal ribosomal protein uS8 family. As to quaternary structure, part of the 30S ribosomal subunit. Contacts proteins S5 and S12.

Its function is as follows. One of the primary rRNA binding proteins, it binds directly to 16S rRNA central domain where it helps coordinate assembly of the platform of the 30S subunit. This chain is Small ribosomal subunit protein uS8, found in Cupriavidus metallidurans (strain ATCC 43123 / DSM 2839 / NBRC 102507 / CH34) (Ralstonia metallidurans).